The sequence spans 150 residues: Oleosin Ara h 10.0102 (150 aa).

The next 2 membrane-spanning stretches (helical) occupy residues Val39–Ala59 and Leu73–Ala93.

The protein belongs to the oleosin family. Expressed in seeds (at protein level).

The protein localises to the lipid droplet. The protein resides in the membrane. Functionally, may have a structural role to stabilize the lipid body during desiccation of the seed by preventing coalescence of the oil. Probably interacts with both lipid and phospholipid moieties of lipid bodies. May also provide recognition signals for specific lipase anchorage in lipolysis during seedling growth. This is Oleosin Ara h 10.0102 from Arachis hypogaea (Peanut).